The chain runs to 170 residues: Shikimate kinase (170 aa).

11 to 16 (LSGKST) contacts ATP. Ser15 contributes to the Mg(2+) binding site. Substrate-binding residues include Asp33, Arg57, and Gly79. ATP is bound at residue Arg119. Substrate is bound at residue Arg137.

Belongs to the shikimate kinase family. In terms of assembly, monomer. Requires Mg(2+) as cofactor.

The protein resides in the cytoplasm. The catalysed reaction is shikimate + ATP = 3-phosphoshikimate + ADP + H(+). It functions in the pathway metabolic intermediate biosynthesis; chorismate biosynthesis; chorismate from D-erythrose 4-phosphate and phosphoenolpyruvate: step 5/7. Its function is as follows. Catalyzes the specific phosphorylation of the 3-hydroxyl group of shikimic acid using ATP as a cosubstrate. The chain is Shikimate kinase from Clostridium botulinum (strain Kyoto / Type A2).